Consider the following 168-residue polypeptide: Plastocyanin, chloroplastic (168 aa).

In terms of domain architecture, Plastocyanin-like spans 70–168 (VEVLLGGGDG…AGMVGKVTVN (99 aa)). 4 residues coordinate Cu cation: His106, Cys153, His156, and Met161.

It belongs to the plastocyanin family. The cofactor is Cu(2+).

It is found in the plastid. The protein resides in the chloroplast thylakoid membrane. Functionally, participates in electron transfer between P700 and the cytochrome b6-f complex in photosystem I. The sequence is that of Plastocyanin, chloroplastic (PETE) from Spinacia oleracea (Spinach).